A 454-amino-acid polypeptide reads, in one-letter code: UDP-N-acetylmuramoyl-tripeptide--D-alanyl-D-alanine ligase (454 aa).

An ATP-binding site is contributed by 116-122 (GSVGKTT).

Belongs to the MurCDEF family. MurF subfamily.

The protein localises to the cytoplasm. It carries out the reaction D-alanyl-D-alanine + UDP-N-acetyl-alpha-D-muramoyl-L-alanyl-gamma-D-glutamyl-meso-2,6-diaminopimelate + ATP = UDP-N-acetyl-alpha-D-muramoyl-L-alanyl-gamma-D-glutamyl-meso-2,6-diaminopimeloyl-D-alanyl-D-alanine + ADP + phosphate + H(+). The protein operates within cell wall biogenesis; peptidoglycan biosynthesis. Involved in cell wall formation. Catalyzes the final step in the synthesis of UDP-N-acetylmuramoyl-pentapeptide, the precursor of murein. This Synechocystis sp. (strain ATCC 27184 / PCC 6803 / Kazusa) protein is UDP-N-acetylmuramoyl-tripeptide--D-alanyl-D-alanine ligase.